We begin with the raw amino-acid sequence, 252 residues long: 2-succinyl-6-hydroxy-2,4-cyclohexadiene-1-carboxylate synthase (252 aa).

Belongs to the AB hydrolase superfamily. MenH family. In terms of assembly, monomer.

It carries out the reaction 5-enolpyruvoyl-6-hydroxy-2-succinyl-cyclohex-3-ene-1-carboxylate = (1R,6R)-6-hydroxy-2-succinyl-cyclohexa-2,4-diene-1-carboxylate + pyruvate. It participates in quinol/quinone metabolism; 1,4-dihydroxy-2-naphthoate biosynthesis; 1,4-dihydroxy-2-naphthoate from chorismate: step 3/7. Its pathway is quinol/quinone metabolism; menaquinone biosynthesis. Catalyzes a proton abstraction reaction that results in 2,5-elimination of pyruvate from 2-succinyl-5-enolpyruvyl-6-hydroxy-3-cyclohexene-1-carboxylate (SEPHCHC) and the formation of 2-succinyl-6-hydroxy-2,4-cyclohexadiene-1-carboxylate (SHCHC). In Salmonella enteritidis PT4 (strain P125109), this protein is 2-succinyl-6-hydroxy-2,4-cyclohexadiene-1-carboxylate synthase.